Reading from the N-terminus, the 100-residue chain is Large ribosomal subunit protein uL23 (100 aa).

The protein belongs to the universal ribosomal protein uL23 family. As to quaternary structure, part of the 50S ribosomal subunit. Contacts protein L29, and trigger factor when it is bound to the ribosome.

Its function is as follows. One of the early assembly proteins it binds 23S rRNA. One of the proteins that surrounds the polypeptide exit tunnel on the outside of the ribosome. Forms the main docking site for trigger factor binding to the ribosome. This Acaryochloris marina (strain MBIC 11017) protein is Large ribosomal subunit protein uL23.